We begin with the raw amino-acid sequence, 952 residues long: Ubiquitin carboxyl-terminal hydrolase CYLD (952 aa).

The tract at residues 106 to 589 (CEERLSLFRN…LEIMIGKKKG (484 aa)) is interaction with TRIP. CAP-Gly domains lie at 153–198 (LAER…VFVA) and 253–286 (DVLPGKESLGYFVGVDMDNPIGNWDGRFDGVQLC). The disordered stretch occupies residues 311–350 (RRPPKLAFMSRGVGDKGSSSHNKPKVTGSTSDPGSRNRSE). Positions 327–346 (GSSSHNKPKVTGSTSDPGSR) are enriched in polar residues. The residue at position 383 (S383) is a Phosphoserine. The tract at residues 386-409 (EMSSDFGHSSPPPQPPSMNSLSSE) is disordered. Residues 390 to 465 (DFGHSSPPPQ…LPISSGNAHG (76 aa)) form an interaction with TRAF2 region. Phosphoserine is present on residues S414 and S418. An interaction with IKBKG/NEMO region spans residues 466 to 680 (LEVGSLAEVK…FTSEEKDPEE (215 aa)). The CAP-Gly 3 domain maps to 488–531 (GQPPGLSDVLAGLELEDECAGCTDGTFRGTRYFTCALKKALFVK). The USP domain occupies 588–946 (KGIQGHYNSC…DAYMCMYQSP (359 aa)). C597 (nucleophile) is an active-site residue. A B-box region spans residues 777–829 (LEDTPRQCRICGGLAMYECRECYDDPDISAGKIKQFCKTCSTQVHLHPRRLNH). Residues C784, C787, C795, C798, C813, C816, H821, and H829 each coordinate Zn(2+). The Proton acceptor role is filled by H867.

The protein belongs to the peptidase C19 family. Interacts (via CAP-Gly domain) with IKBKG/NEMO (via proline-rich C-terminal region). Interacts with TRAF2 and TRIP. Interacts with PLK1, DVL1, DVL3, MAVS, TBK1, IKKE and RIGI. Interacts (via CAP-Gly domain) with microtubules. Interacts with HDAC6 and BCL3. Interacts with MAP3K7. Identified in a complex with TRAF6 and SQSTM1. Interacts with OPTN and SQSTM1. Interacts with CEP350. Interacts with RNF31; the interaction is indirect and is mediated via SPATA2. Interacts with SPATA2 (via the PUB domain); the interaction is direct and recruits CYLD to the LUBAC complex, thereby regulating TNF-alpha-induced necroptosis. In terms of processing, phosphorylated on several serine residues by IKKA and/or IKKB in response to immune stimuli. Phosphorylation requires IKBKG. Phosphorylation abolishes TRAF2 deubiquitination, interferes with the activation of Jun kinases, and strongly reduces CD40-dependent gene activation by NF-kappa-B. Post-translationally, ubiquitinated. Polyubiquitinated in hepatocytes treated with palmitic acid. Ubiquitination is mediated by E3 ligase TRIM47 and leads to proteasomal degradation.

Its subcellular location is the cytoplasm. It is found in the perinuclear region. The protein localises to the cytoskeleton. It localises to the cell membrane. The protein resides in the microtubule organizing center. Its subcellular location is the centrosome. It is found in the spindle. The protein localises to the cilium basal body. The catalysed reaction is Thiol-dependent hydrolysis of ester, thioester, amide, peptide and isopeptide bonds formed by the C-terminal Gly of ubiquitin (a 76-residue protein attached to proteins as an intracellular targeting signal).. Its function is as follows. Deubiquitinase that specifically cleaves 'Lys-63'- and linear 'Met-1'-linked polyubiquitin chains and is involved in NF-kappa-B activation and TNF-alpha-induced necroptosis. Negatively regulates NF-kappa-B activation by deubiquitinating upstream signaling factors. Contributes to the regulation of cell survival, proliferation and differentiation via its effects on NF-kappa-B activation. Negative regulator of Wnt signaling. Inhibits HDAC6 and thereby promotes acetylation of alpha-tubulin and stabilization of microtubules. Plays a role in the regulation of microtubule dynamics, and thereby contributes to the regulation of cell proliferation, cell polarization, cell migration, and angiogenesis. Required for normal cell cycle progress and normal cytokinesis. Inhibits nuclear translocation of NF-kappa-B. Plays a role in the regulation of inflammation and the innate immune response, via its effects on NF-kappa-B activation. Dispensable for the maturation of intrathymic natural killer cells, but required for the continued survival of immature natural killer cells. Negatively regulates TNFRSF11A signaling and osteoclastogenesis. Involved in the regulation of ciliogenesis, allowing ciliary basal bodies to migrate and dock to the plasma membrane; this process does not depend on NF-kappa-B activation. Ability to remove linear ('Met-1'-linked) polyubiquitin chains regulates innate immunity and TNF-alpha-induced necroptosis: recruited to the LUBAC complex via interaction with SPATA2 and restricts linear polyubiquitin formation on target proteins. Regulates innate immunity by restricting linear polyubiquitin formation on RIPK2 in response to NOD2 stimulation. Involved in TNF-alpha-induced necroptosis by removing linear ('Met-1'-linked) polyubiquitin chains from RIPK1, thereby regulating the kinase activity of RIPK1. Negatively regulates intestinal inflammation by removing 'Lys-63' linked polyubiquitin chain of NLRP6, thereby reducing the interaction between NLRP6 and PYCARD/ASC and formation of the NLRP6 inflammasome. Does not catalyze deubiquitination of heterotypic 'Lys-63'-/'Lys-48'-linked branched ubiquitin chains. Removes 'Lys-63' linked polyubiquitin chain of MAP3K7, which inhibits phosphorylation and blocks downstream activation of the JNK-p38 kinase cascades. Also removes 'Lys-63'-linked polyubiquitin chains of MAP3K1 and MA3P3K3, which inhibit their interaction with MAP2K1 and MAP2K2. This Mus musculus (Mouse) protein is Ubiquitin carboxyl-terminal hydrolase CYLD (Cyld).